The following is a 227-amino-acid chain: MKFAVIVFPGSNCDVDMFHAIKDELGEEVDYVWHDTENLDGYDAILLPGGFSYGDYLRCGAISRFANAMKAVQKAAEQGKPILGVCNGFQILVESGLLPGALMRNENLKFMCRTVQLRVENNETMFTSQYEKDEVINIPIAHGEGNYYCDEETLKQLEENNQIAFRYVENPNGSVSDIAGIVNEKGNVLGMMPHPERAVDELLGGAEGLKVFQSILKQWRETYVVNA.

Positions 3-225 constitute a Glutamine amidotransferase type-1 domain; it reads FAVIVFPGSN…LKQWRETYVV (223 aa). Residue Cys-86 is the Nucleophile of the active site. Active-site residues include His-194 and Glu-196.

As to quaternary structure, part of the FGAM synthase complex composed of 1 PurL, 1 PurQ and 2 PurS subunits.

The protein resides in the cytoplasm. It catalyses the reaction N(2)-formyl-N(1)-(5-phospho-beta-D-ribosyl)glycinamide + L-glutamine + ATP + H2O = 2-formamido-N(1)-(5-O-phospho-beta-D-ribosyl)acetamidine + L-glutamate + ADP + phosphate + H(+). It carries out the reaction L-glutamine + H2O = L-glutamate + NH4(+). It participates in purine metabolism; IMP biosynthesis via de novo pathway; 5-amino-1-(5-phospho-D-ribosyl)imidazole from N(2)-formyl-N(1)-(5-phospho-D-ribosyl)glycinamide: step 1/2. Functionally, part of the phosphoribosylformylglycinamidine synthase complex involved in the purines biosynthetic pathway. Catalyzes the ATP-dependent conversion of formylglycinamide ribonucleotide (FGAR) and glutamine to yield formylglycinamidine ribonucleotide (FGAM) and glutamate. The FGAM synthase complex is composed of three subunits. PurQ produces an ammonia molecule by converting glutamine to glutamate. PurL transfers the ammonia molecule to FGAR to form FGAM in an ATP-dependent manner. PurS interacts with PurQ and PurL and is thought to assist in the transfer of the ammonia molecule from PurQ to PurL. In Bacillus cereus (strain 03BB102), this protein is Phosphoribosylformylglycinamidine synthase subunit PurQ.